The following is a 931-amino-acid chain: MEAEAAAAVVASSASASASAGRSRPSSSAAQVTSNSAVRAGEENAASLYVLSVIDSLKKRITADRLTYIKNRIGENKTNISSYTQRTYNLSKNRQISTSKGTDSASNLLTKRQDDALCTLHSLDIIPVDKDGGTFQDESPFSSSNVMFGGNLGPKNAIIRPIKLPEVPKLPPYTTWIFLDRNQRMTEDQSVLGRRRIYYDTSCGEALICSDSEDEAIEDEEEKKEFKHSEDHIIRMTVQECGMSDAVLQTLARHMERAADDIKARYEILHGEKTKDSCKKGTEHNVKVEDLYCDKDLDAALDSFDNLFCRRCLVFDCKLHGCSQDLVFPTEKQPAWSGVDDSVPCGIHCHKLASEPDAAAGADHMLFDVEEPTHSSDNVMNQPGSNRKKNGSSGRKTKSQQSESSSTARVISESSDSEVHPISNKSPQHSPSPSKVKIGPKGGIRKITNRRIAERILMSVKKGQREMASSDSNFVSGYLLARDMKLRSDTRNGNKELIVSSQQSSPSTRSSKKKSTPQIGNSSAFAEAHNDSTEEANNRHSATDGYDSSRKEEFVNENLCKQEVYLRSWKAIEQGLLVKGLEIFGRNSCLIARNLLGGMKTCKDVFQYMNYIENNSASGALSGVDSLVKGYIKGTELRTRSRYFRRRGKVRRLKYTWKSAGYNFKRITERKDQPCRQYNPCGCQSTCGKQCPCLSNGTCCEKYCGCPKICKNRFRGCHCAKSQCRSRQCPCFAADRECDPDVCRNCWVGCGDGTLGVPNQRGDNYECRNMKLLLKQQQRVLLGRSDVSGWGAFLKNSVSKHEYLGEYTGELISHKEADKRGKIYDRENSSFLFNLNNEYVLDAYRMGDKLKFANHAPDPNCYAKVIMVTGDHRVGIFAKERILAGEELFYDYRYEPDRAPAWARKPEASGAKDDGQPFNGRAKKLAQNNRG.

The segment covering 1–30 (MEAEAAAAVVASSASASASAGRSRPSSSAA) has biased composition (low complexity). Disordered regions lie at residues 1-37 (MEAEAAAAVVASSASASASAGRSRPSSSAAQVTSNSA), 372-450 (PTHS…ITNR), and 491-549 (RNGN…YDSS). Over residues 375–385 (SSDNVMNQPGS) the composition is skewed to polar residues. The span at 386–398 (NRKKNGSSGRKTK) shows a compositional bias: basic residues. Over residues 423–433 (SNKSPQHSPSP) the composition is skewed to polar residues. Positions 500–509 (SSQQSSPSTR) are enriched in low complexity. Basic and acidic residues predominate over residues 528 to 549 (AHNDSTEEANNRHSATDGYDSS). An SANT domain is found at 565–615 (YLRSWKAIEQGLLVKGLEIFGRNSCLIARNLLGGMKTCKDVFQYMNYIENN). The CXC domain occupies 664–763 (FKRITERKDQ…TLGVPNQRGD (100 aa)). The 116-residue stretch at 778-893 (QRVLLGRSDV…AGEELFYDYR (116 aa)) folds into the SET domain. Positions 903–915 (ARKPEASGAKDDG) are enriched in basic and acidic residues. Residues 903–931 (ARKPEASGAKDDGQPFNGRAKKLAQNNRG) form a disordered region.

It belongs to the class V-like SAM-binding methyltransferase superfamily. Histone-lysine methyltransferase family. EZ subfamily. As to expression, widely expressed.

The protein resides in the nucleus. The enzyme catalyses L-lysyl(27)-[histone H3] + 3 S-adenosyl-L-methionine = N(6),N(6),N(6)-trimethyl-L-lysyl(27)-[histone H3] + 3 S-adenosyl-L-homocysteine + 3 H(+). Its function is as follows. Polycomb group (PcG) protein. Catalytic subunit of some PcG multiprotein complex, which methylates 'Lys-27' of histone H3, leading to transcriptional repression of the affected target genes. PcG proteins are not required to initiate repression, but to maintain it during later stages of development. In Zea mays (Maize), this protein is Histone-lysine N-methyltransferase EZ1 (EZ1).